Reading from the N-terminus, the 345-residue chain is Phosphoribosylformylglycinamidine cyclo-ligase (345 aa).

This sequence belongs to the AIR synthase family.

Its subcellular location is the cytoplasm. It carries out the reaction 2-formamido-N(1)-(5-O-phospho-beta-D-ribosyl)acetamidine + ATP = 5-amino-1-(5-phospho-beta-D-ribosyl)imidazole + ADP + phosphate + H(+). It participates in purine metabolism; IMP biosynthesis via de novo pathway; 5-amino-1-(5-phospho-D-ribosyl)imidazole from N(2)-formyl-N(1)-(5-phospho-D-ribosyl)glycinamide: step 2/2. This is Phosphoribosylformylglycinamidine cyclo-ligase from Salmonella choleraesuis (strain SC-B67).